The chain runs to 453 residues: Bifunctional protein GlmU (453 aa).

Residues 1–225 (MNIVILAAGT…GWETLGVNSK (225 aa)) are pyrophosphorylase. UDP-N-acetyl-alpha-D-glucosamine-binding positions include 6–9 (LAAG), lysine 20, glutamine 71, 76–77 (GT), 98–100 (YGD), glycine 135, glutamate 150, asparagine 165, and asparagine 223. Aspartate 100 contributes to the Mg(2+) binding site. Asparagine 223 provides a ligand contact to Mg(2+). The segment at 226-246 (AQLAELERIHQRNLADALLAA) is linker. The N-acetyltransferase stretch occupies residues 247-453 (GVTLADPARI…GYVRPVKKKS (207 aa)). Residues arginine 329 and lysine 347 each contribute to the UDP-N-acetyl-alpha-D-glucosamine site. Histidine 359 functions as the Proton acceptor in the catalytic mechanism. UDP-N-acetyl-alpha-D-glucosamine-binding residues include tyrosine 362 and asparagine 373. Residues alanine 376, 382–383 (NY), serine 401, and alanine 419 each bind acetyl-CoA.

This sequence in the N-terminal section; belongs to the N-acetylglucosamine-1-phosphate uridyltransferase family. In the C-terminal section; belongs to the transferase hexapeptide repeat family. In terms of assembly, homotrimer. The cofactor is Mg(2+).

The protein resides in the cytoplasm. It carries out the reaction alpha-D-glucosamine 1-phosphate + acetyl-CoA = N-acetyl-alpha-D-glucosamine 1-phosphate + CoA + H(+). The catalysed reaction is N-acetyl-alpha-D-glucosamine 1-phosphate + UTP + H(+) = UDP-N-acetyl-alpha-D-glucosamine + diphosphate. Its pathway is nucleotide-sugar biosynthesis; UDP-N-acetyl-alpha-D-glucosamine biosynthesis; N-acetyl-alpha-D-glucosamine 1-phosphate from alpha-D-glucosamine 6-phosphate (route II): step 2/2. It participates in nucleotide-sugar biosynthesis; UDP-N-acetyl-alpha-D-glucosamine biosynthesis; UDP-N-acetyl-alpha-D-glucosamine from N-acetyl-alpha-D-glucosamine 1-phosphate: step 1/1. The protein operates within bacterial outer membrane biogenesis; LPS lipid A biosynthesis. Its function is as follows. Catalyzes the last two sequential reactions in the de novo biosynthetic pathway for UDP-N-acetylglucosamine (UDP-GlcNAc). The C-terminal domain catalyzes the transfer of acetyl group from acetyl coenzyme A to glucosamine-1-phosphate (GlcN-1-P) to produce N-acetylglucosamine-1-phosphate (GlcNAc-1-P), which is converted into UDP-GlcNAc by the transfer of uridine 5-monophosphate (from uridine 5-triphosphate), a reaction catalyzed by the N-terminal domain. The chain is Bifunctional protein GlmU from Burkholderia pseudomallei (strain K96243).